Consider the following 447-residue polypeptide: tRNA-2-methylthio-N(6)-dimethylallyladenosine synthase (447 aa).

The region spanning 3 to 120 (KKLYIETHGC…LPEMIDAART (118 aa)) is the MTTase N-terminal domain. 6 residues coordinate [4Fe-4S] cluster: Cys12, Cys49, Cys83, Cys157, Cys161, and Cys164. Positions 143–375 (RVDGPSAFVS…QHRINQYGFE (233 aa)) constitute a Radical SAM core domain. Residues 378–442 (RRMVGTVQRI…PHSLRGTLLD (65 aa)) enclose the TRAM domain.

It belongs to the methylthiotransferase family. MiaB subfamily. Monomer. Requires [4Fe-4S] cluster as cofactor.

It localises to the cytoplasm. The catalysed reaction is N(6)-dimethylallyladenosine(37) in tRNA + (sulfur carrier)-SH + AH2 + 2 S-adenosyl-L-methionine = 2-methylsulfanyl-N(6)-dimethylallyladenosine(37) in tRNA + (sulfur carrier)-H + 5'-deoxyadenosine + L-methionine + A + S-adenosyl-L-homocysteine + 2 H(+). In terms of biological role, catalyzes the methylthiolation of N6-(dimethylallyl)adenosine (i(6)A), leading to the formation of 2-methylthio-N6-(dimethylallyl)adenosine (ms(2)i(6)A) at position 37 in tRNAs that read codons beginning with uridine. This Ectopseudomonas mendocina (strain ymp) (Pseudomonas mendocina) protein is tRNA-2-methylthio-N(6)-dimethylallyladenosine synthase.